A 136-amino-acid polypeptide reads, in one-letter code: Transcription antitermination protein NusB (136 aa).

The protein belongs to the NusB family.

Functionally, involved in transcription antitermination. Required for transcription of ribosomal RNA (rRNA) genes. Binds specifically to the boxA antiterminator sequence of the ribosomal RNA (rrn) operons. The chain is Transcription antitermination protein NusB from Arthrobacter sp. (strain FB24).